The chain runs to 523 residues: Dynein regulatory complex subunit 3 (523 aa).

LRR repeat units lie at residues 44–65 (DVLSLQLDFRNILRIDNLWQFE), 66–87 (NLRKLQLDNNIIEKIEGLENLA), 88–109 (HLVWLDLSFNNIETIEGLDTLV), 110–131 (NLEDLSLFNNRISKIDSLDALV), and 132–153 (KLQVLSLGNNRIDNMMNIIYLR). Residues 166-204 (NPISEAEDYKMFICAYLPDLMYLDYRRIDDHTKKLAEAK) enclose the LRRCT domain. Coiled coils occupy residues 208-242 (SIDELKHQENLMQAQLEDEQAQREELEKHKTAFVE) and 366-391 (MTLEMQLVEQLEETINMFERNIVDMV).

The protein belongs to the DRC3 family. In terms of assembly, component of the nexin-dynein regulatory complex (N-DRC). Interacts with DRC1. Interacts with TCTE1/DRC5. Interacts with DRC7.

It localises to the cytoplasm. It is found in the cytoskeleton. The protein resides in the cilium axoneme. The protein localises to the cell projection. Its subcellular location is the cilium. It localises to the flagellum axoneme. It is found in the flagellum. Functionally, component of the nexin-dynein regulatory complex (N-DRC) a key regulator of ciliary/flagellar motility which maintains the alignment and integrity of the distal axoneme and regulates microtubule sliding in motile axonemes. The sequence is that of Dynein regulatory complex subunit 3 (DRC3) from Homo sapiens (Human).